Here is a 940-residue protein sequence, read N- to C-terminus: Inter-alpha-trypsin inhibitor heavy chain H5 (940 aa).

An N-terminal signal peptide occupies residues 1–16 (MLPLLGLCFALPLCAG). Positions 35-161 (IPRQVRLLQR…KAAFLLSYEE (127 aa)) constitute a VIT domain. N-linked (GlcNAc...) asparagine glycans are attached at residues Asn-97 and Asn-127. The disordered stretch occupies residues 207–227 (NSRQRGSGRGPDDSGPPPSTV). N-linked (GlcNAc...) asparagine glycans are attached at residues Asn-231, Asn-421, Asn-508, Asn-694, Asn-778, and Asn-795. One can recognise a VWFA domain in the interval 295-478 (NVVFVLDSSA…AQLIGFYDEI (184 aa)).

It belongs to the ITIH family.

It localises to the secreted. May act as a tumor suppressor. The sequence is that of Inter-alpha-trypsin inhibitor heavy chain H5 (ITIH5) from Bos taurus (Bovine).